We begin with the raw amino-acid sequence, 448 residues long: DNA repair protein RadA (448 aa).

The segment at 10–27 (CSNCGNTSPKWSGQCFDC) adopts a C4-type zinc-finger fold. 91–98 (GDPGIGKS) provides a ligand contact to ATP. The RadA KNRFG motif signature appears at 250-254 (KNRFG). Positions 349–448 (EVYLSIAGGL…KDLKLLLGSS (100 aa)) are lon-protease-like.

It belongs to the RecA family. RadA subfamily.

DNA-dependent ATPase involved in processing of recombination intermediates, plays a role in repairing DNA breaks. Stimulates the branch migration of RecA-mediated strand transfer reactions, allowing the 3' invading strand to extend heteroduplex DNA faster. Binds ssDNA in the presence of ADP but not other nucleotides, has ATPase activity that is stimulated by ssDNA and various branched DNA structures, but inhibited by SSB. Does not have RecA's homology-searching function. The chain is DNA repair protein RadA from Rickettsia bellii (strain RML369-C).